A 345-amino-acid chain; its full sequence is L-threonine 3-dehydrogenase (345 aa).

Cys42 provides a ligand contact to Zn(2+). Residues Thr44 and His47 each act as charge relay system in the active site. Zn(2+)-binding residues include His67, Glu68, Cys97, Cys100, Cys103, and Cys111. NAD(+)-binding positions include Ile179, Asp199, Arg204, 266–268 (LGI), and 290–291 (IY).

It belongs to the zinc-containing alcohol dehydrogenase family. In terms of assembly, homotetramer. It depends on Zn(2+) as a cofactor.

It localises to the cytoplasm. The enzyme catalyses L-threonine + NAD(+) = (2S)-2-amino-3-oxobutanoate + NADH + H(+). It participates in amino-acid degradation; L-threonine degradation via oxydo-reductase pathway; glycine from L-threonine: step 1/2. Functionally, catalyzes the NAD(+)-dependent oxidation of L-threonine to 2-amino-3-ketobutyrate. This is L-threonine 3-dehydrogenase from Rhizobium etli (strain CIAT 652).